A 370-amino-acid polypeptide reads, in one-letter code: Protein STRICTOSIDINE SYNTHASE-LIKE 4 (370 aa).

The first 21 residues, 1–21 (MVLFFSTRFLFFSIFFPCLIS), serve as a signal peptide directing secretion. N101 is a glycosylation site (N-linked (GlcNAc...) asparagine). Phosphotyrosine is present on Y303.

This sequence belongs to the strictosidine synthase family.

The protein resides in the vacuole. In Arabidopsis thaliana (Mouse-ear cress), this protein is Protein STRICTOSIDINE SYNTHASE-LIKE 4.